Reading from the N-terminus, the 91-residue chain is Elongation factor 1-beta (91 aa).

This sequence belongs to the EF-1-beta/EF-1-delta family.

Its function is as follows. Promotes the exchange of GDP for GTP in EF-1-alpha/GDP, thus allowing the regeneration of EF-1-alpha/GTP that could then be used to form the ternary complex EF-1-alpha/GTP/AAtRNA. The sequence is that of Elongation factor 1-beta from Saccharolobus islandicus (strain Y.N.15.51 / Yellowstone #2) (Sulfolobus islandicus).